We begin with the raw amino-acid sequence, 306 residues long: Probable cobalamin biosynthesis protein CobD (306 aa).

Helical transmembrane passes span 54–74, 88–108, 155–175, 207–227, and 286–306; these read LFGFLNVVLVLAIVFFMAFEI, ISLYSIILSFSIGHKSLIEFS, ITDSIIAPLIYAAIFGLPGAF, ILNFIPSRIAGMLLIISAPFY, and SLKAVDYSVLLFLIIYMILFM.

This sequence belongs to the CobD/CbiB family.

The protein resides in the cell membrane. The protein operates within cofactor biosynthesis; adenosylcobalamin biosynthesis. Converts cobyric acid to cobinamide by the addition of aminopropanol on the F carboxylic group. The protein is Probable cobalamin biosynthesis protein CobD of Methanococcus maripaludis (strain DSM 14266 / JCM 13030 / NBRC 101832 / S2 / LL).